The primary structure comprises 367 residues: Homoserine O-acetyltransferase (367 aa).

The region spanning 41-339 (NLIVLEHALT…PVGHDAFLTE (299 aa)) is the AB hydrolase-1 domain. The active-site Nucleophile is the S136. R205 serves as a coordination point for substrate. Active-site residues include D303 and H333. D334 contacts substrate.

It belongs to the AB hydrolase superfamily. MetX family. In terms of assembly, homodimer.

It is found in the cytoplasm. It carries out the reaction L-homoserine + acetyl-CoA = O-acetyl-L-homoserine + CoA. It participates in amino-acid biosynthesis; L-methionine biosynthesis via de novo pathway; O-acetyl-L-homoserine from L-homoserine: step 1/1. Transfers an acetyl group from acetyl-CoA to L-homoserine, forming acetyl-L-homoserine. This is Homoserine O-acetyltransferase from Corynebacterium diphtheriae (strain ATCC 700971 / NCTC 13129 / Biotype gravis).